The following is a 410-amino-acid chain: Cytochrome P450(MEG) (410 aa).

Cys-355 lines the heme pocket.

It belongs to the cytochrome P450 family. Requires heme as cofactor.

Its subcellular location is the cytoplasm. The catalysed reaction is reduced 2[4Fe-4S]-[ferredoxin] + progesterone + O2 + 2 H(+) = 15beta-hydroxyprogesterone + oxidized 2[4Fe-4S]-[ferredoxin] + H2O. Its function is as follows. Has the capacity to hydroxylate certain steroids in the 15-beta position. Also hydroxylates progesterone in the 11-alpha and 9-beta position. The chain is Cytochrome P450(MEG) (cyp106A2) from Priestia megaterium (Bacillus megaterium).